A 345-amino-acid polypeptide reads, in one-letter code: NADPH dehydrogenase (345 aa).

23 to 26 is a binding site for FMN; that stretch reads SPMC. Y28 is a substrate binding site. FMN contacts are provided by A60 and Q102. Position 164-167 (164-167) interacts with substrate; it reads HGAH. FMN-binding positions include R215 and 307–308; that span reads GR.

The protein belongs to the NADH:flavin oxidoreductase/NADH oxidase family. NamA subfamily. In terms of assembly, homotetramer. Requires FMN as cofactor.

It catalyses the reaction A + NADPH + H(+) = AH2 + NADP(+). Catalyzes the reduction of the double bond of an array of alpha,beta-unsaturated aldehydes and ketones. It also reduces the nitro group of nitroester and nitroaromatic compounds. It could have a role in detoxification processes. In Bacillus cereus (strain ATCC 14579 / DSM 31 / CCUG 7414 / JCM 2152 / NBRC 15305 / NCIMB 9373 / NCTC 2599 / NRRL B-3711), this protein is NADPH dehydrogenase.